A 383-amino-acid chain; its full sequence is Chitinase-3-like protein 1 (383 aa).

The N-terminal stretch at 1-21 (MGLRVAQTGFVALVLLQSCAA) is a signal peptide. One can recognise a GH18 domain in the interval 22-383 (YKLVCYYTSW…SAIKDVLAAA (362 aa)). Cys26 and Cys51 form a disulfide bridge. Asn60 carries N-linked (GlcNAc...) asparagine glycosylation. Residues 70–71 (EW), 97–100 (GGWN), Tyr141, 204–207 (LTYD), and Arg263 each bind chitin. Cysteines 300 and 364 form a disulfide. The segment at 324 to 338 (QWVGYDDQESVKNKA) is important for AKT1 activation and IL8 production. Trp352 provides a ligand contact to chitin.

It belongs to the glycosyl hydrolase 18 family. In terms of assembly, monomer. As to expression, detected in smooth muscle cells in atherosclerotic plaques. Detected in regions of vascular occlusion in the aorta.

The protein resides in the secreted. Its subcellular location is the extracellular space. It is found in the cytoplasm. The protein localises to the perinuclear region. It localises to the endoplasmic reticulum. In terms of biological role, carbohydrate-binding lectin with a preference for chitin. Has no chitinase activity. May play a role in tissue remodeling and in the capacity of cells to respond to and cope with changes in their environment. Plays a role in T-helper cell type 2 (Th2) inflammatory response and IL-13-induced inflammation, regulating allergen sensitization, inflammatory cell apoptosis, dendritic cell accumulation and M2 macrophage differentiation. Facilitates invasion of pathogenic enteric bacteria into colonic mucosa and lymphoid organs. Mediates activation of AKT1 signaling pathway and subsequent IL8 production in colonic epithelial cells. Regulates antibacterial responses in lung by contributing to macrophage bacterial killing, controlling bacterial dissemination and augmenting host tolerance. Also regulates hyperoxia-induced injury, inflammation and epithelial apoptosis in lung. Stimulates migration and adhesion of cultured vascular smooth muscle cells. The sequence is that of Chitinase-3-like protein 1 (CHI3L1) from Sus scrofa (Pig).